Here is a 117-residue protein sequence, read N- to C-terminus: Large ribosomal subunit protein bL19 (117 aa).

Belongs to the bacterial ribosomal protein bL19 family.

Its function is as follows. This protein is located at the 30S-50S ribosomal subunit interface and may play a role in the structure and function of the aminoacyl-tRNA binding site. The polypeptide is Large ribosomal subunit protein bL19 (Azobacteroides pseudotrichonymphae genomovar. CFP2).